The primary structure comprises 167 residues: CS6 fimbrial subunit B (167 aa).

A signal peptide spans 1 to 21 (MLKKIISAIALIAGTSGVVNA).

It localises to the fimbrium. The chain is CS6 fimbrial subunit B (cssB) from Escherichia coli.